Consider the following 224-residue polypeptide: Orotidine 5'-phosphate decarboxylase (224 aa).

Substrate-binding positions include Asp-10, Lys-32, 59–68 (DLKLHDIPNT), Thr-115, Arg-175, Gln-184, Gly-204, and Arg-205. Lys-61 (proton donor) is an active-site residue.

Belongs to the OMP decarboxylase family. Type 1 subfamily. In terms of assembly, homodimer.

The catalysed reaction is orotidine 5'-phosphate + H(+) = UMP + CO2. It functions in the pathway pyrimidine metabolism; UMP biosynthesis via de novo pathway; UMP from orotate: step 2/2. Catalyzes the decarboxylation of orotidine 5'-monophosphate (OMP) to uridine 5'-monophosphate (UMP). The chain is Orotidine 5'-phosphate decarboxylase from Novosphingobium aromaticivorans (strain ATCC 700278 / DSM 12444 / CCUG 56034 / CIP 105152 / NBRC 16084 / F199).